A 713-amino-acid polypeptide reads, in one-letter code: Glycine--tRNA ligase beta subunit (713 aa).

It belongs to the class-II aminoacyl-tRNA synthetase family. In terms of assembly, tetramer of two alpha and two beta subunits.

The protein resides in the cytoplasm. The enzyme catalyses tRNA(Gly) + glycine + ATP = glycyl-tRNA(Gly) + AMP + diphosphate. The protein is Glycine--tRNA ligase beta subunit of Leptothrix cholodnii (strain ATCC 51168 / LMG 8142 / SP-6) (Leptothrix discophora (strain SP-6)).